Reading from the N-terminus, the 636-residue chain is Basic helix-loop-helix ARNT-like protein 2 (636 aa).

Residues 25-62 (VSSRVSPGTRPTAMGSFSSHMTEFPRKRKGSDSDPSQS) are disordered. Residues 46–258 (TEFPRKRKGS…SPREKLIDAK (213 aa)) form an interaction with PER2 region. Residues 49–54 (PRKRKG) carry the Nuclear localization signal motif. The bHLH domain maps to 107-160 (AFREAHSQTEKRRRDKMNNLIEELSAMIPQCNPMARKLDKLTVLRMAVQHLRSL). The Nuclear export signal 1 motif lies at 177 to 187 (LQDNELRHLIL). Residues 178 to 250 (QDNELRHLIL…EQLSSFDISP (73 aa)) enclose the PAS 1 domain. Lys-287 is covalently cross-linked (Glycyl lysine isopeptide (Lys-Gly) (interchain with G-Cter in SUMO2 and SUMO3)). Lys-294 is covalently cross-linked (Glycyl lysine isopeptide (Lys-Gly) (interchain with G-Cter in SUMO2)). The PAS 2 domain maps to 357–427 (VPQNSGEINV…DKHKAVLQSK (71 aa)). The Nuclear export signal 2 signature appears at 392-400 (LGYLPQELL). In terms of domain architecture, PAC spans 432–475 (TDSYKFRAKDGSFVTLKSQWFSFTNPWTKELEYIVSVNTLVLGH).

Component of the circadian core oscillator, which includes the CRY proteins, CLOCK, or NPAS2, BMAL1 or BMAL2, CSNK1D and/or CSNK1E, TIMELESS and the PER proteins. Interacts directly with CLOCK to form the BMAL2-CLOCK transactivator. Can form heterodimers or homodimers which interact directly with CLOCK to form the transcription activator. Interacts with NPAS2 and HIF1A. Interacts with PER2. In terms of tissue distribution, expressed in fetal brain. Highly expressed in brain and placenta. Lower levels in heart, liver, thymus, kidney and lung. Located to endothelial cells and neuronal cells of the suprachiasmatic nucleus (SCN). Also detected in endothelial cells of the heart, lung and kidney. In the brain, specifically expressed in the thalamus, hippocampus and amygdala.

The protein localises to the nucleus. Its function is as follows. Transcriptional activator which forms a core component of the circadian clock. The circadian clock, an internal time-keeping system, regulates various physiological processes through the generation of approximately 24 hour circadian rhythms in gene expression, which are translated into rhythms in metabolism and behavior. It is derived from the Latin roots 'circa' (about) and 'diem' (day) and acts as an important regulator of a wide array of physiological functions including metabolism, sleep, body temperature, blood pressure, endocrine, immune, cardiovascular, and renal function. Consists of two major components: the central clock, residing in the suprachiasmatic nucleus (SCN) of the brain, and the peripheral clocks that are present in nearly every tissue and organ system. Both the central and peripheral clocks can be reset by environmental cues, also known as Zeitgebers (German for 'timegivers'). The predominant Zeitgeber for the central clock is light, which is sensed by retina and signals directly to the SCN. The central clock entrains the peripheral clocks through neuronal and hormonal signals, body temperature and feeding-related cues, aligning all clocks with the external light/dark cycle. Circadian rhythms allow an organism to achieve temporal homeostasis with its environment at the molecular level by regulating gene expression to create a peak of protein expression once every 24 hours to control when a particular physiological process is most active with respect to the solar day. Transcription and translation of core clock components (CLOCK, NPAS2, BMAL1, BMAL2, PER1, PER2, PER3, CRY1 and CRY2) plays a critical role in rhythm generation, whereas delays imposed by post-translational modifications (PTMs) are important for determining the period (tau) of the rhythms (tau refers to the period of a rhythm and is the length, in time, of one complete cycle). A diurnal rhythm is synchronized with the day/night cycle, while the ultradian and infradian rhythms have a period shorter and longer than 24 hours, respectively. Disruptions in the circadian rhythms contribute to the pathology of cardiovascular diseases, cancer, metabolic syndromes and aging. A transcription/translation feedback loop (TTFL) forms the core of the molecular circadian clock mechanism. Transcription factors, CLOCK or NPAS2 and BMAL1 or BMAL2, form the positive limb of the feedback loop, act in the form of a heterodimer and activate the transcription of core clock genes and clock-controlled genes (involved in key metabolic processes), harboring E-box elements (5'-CACGTG-3') within their promoters. The core clock genes: PER1/2/3 and CRY1/2 which are transcriptional repressors form the negative limb of the feedback loop and interact with the CLOCK|NPAS2-BMAL1|BMAL2 heterodimer inhibiting its activity and thereby negatively regulating their own expression. This heterodimer also activates nuclear receptors NR1D1/2 and RORA/B/G, which form a second feedback loop and which activate and repress BMAL1 transcription, respectively. The CLOCK-BMAL2 heterodimer activates the transcription of SERPINE1/PAI1 and BHLHE40/DEC1. The sequence is that of Basic helix-loop-helix ARNT-like protein 2 from Homo sapiens (Human).